A 365-amino-acid chain; its full sequence is Glycerol dehydrogenase (365 aa).

Asp-37, Gly-94, Lys-95, Thr-116, and Ser-119 together coordinate NAD(+). Asp-121 contributes to the glycerol binding site. Residues Ser-125, Leu-127, and Tyr-131 each coordinate NAD(+). Mn(2+) contacts are provided by Asp-171, His-254, and His-271. His-254 contacts glycerol.

The protein belongs to the iron-containing alcohol dehydrogenase family. Homohexamer. Requires Mn(2+) as cofactor.

The enzyme catalyses glycerol + NAD(+) = dihydroxyacetone + NADH + H(+). It catalyses the reaction hydroxyacetone + NADH + H(+) = (S)-propane-1,2-diol + NAD(+). It participates in polyol metabolism; glycerol fermentation; glycerone phosphate from glycerol (oxidative route): step 1/2. With respect to regulation, inhibited by zinc. Functionally, catalyzes the NAD-dependent oxidation of glycerol to dihydroxyacetone (glycerone). Allows microorganisms to utilize glycerol as a source of carbon under anaerobic conditions. Exhibits a rather broad substrate specificity since it can also oxidize 1,2-propanediol and 2,3-butanediol and reduce dihydroxyacetone. Cannot use NADP(+) as an electron acceptor for the oxidation of glycerol. This is Glycerol dehydrogenase from Citrobacter freundii.